A 200-amino-acid chain; its full sequence is Endochitinase (200 aa).

Catalysis depends on Glu-58, which acts as the Proton donor.

The protein belongs to the glycosyl hydrolase 19 family. Chitinase class I subfamily.

The catalysed reaction is Random endo-hydrolysis of N-acetyl-beta-D-glucosaminide (1-&gt;4)-beta-linkages in chitin and chitodextrins.. In terms of biological role, this protein functions as a defense against chitin-containing fungal pathogens. In Avena sativa (Oat), this protein is Endochitinase.